The primary structure comprises 414 residues: uncharacterized protein (414 aa).

Residues 87–117 (KTNDDNKTNGRETHLRPSPSKPEYTGRPTQN) are disordered. The segment covering 88 to 101 (TNDDNKTNGRETHL) has biased composition (basic and acidic residues). Residues 243–405 (SMLQSSIDKL…RNKLEMEVER (163 aa)) are a coiled coil.

This is an uncharacterized protein from Encephalitozoon cuniculi (strain GB-M1) (Microsporidian parasite).